The primary structure comprises 160 residues: Putative pre-16S rRNA nuclease (160 aa).

It belongs to the YqgF nuclease family.

The protein localises to the cytoplasm. Functionally, could be a nuclease involved in processing of the 5'-end of pre-16S rRNA. In Cereibacter sphaeroides (strain ATCC 17029 / ATH 2.4.9) (Rhodobacter sphaeroides), this protein is Putative pre-16S rRNA nuclease.